The chain runs to 323 residues: Cytochrome c biogenesis protein CcsA (323 aa).

The next 8 helical transmembrane spans lie at 9–29 (ILTH…LITL), 37–57 (LYVS…GLLV), 71–91 (LYES…FTYF), 100–120 (VSAI…SGFL), 145–165 (MVLG…LIVI), 227–247 (IISL…VWAN), 261–275 (TWAF…IYLH), and 288–308 (AIVA…VNLL).

This sequence belongs to the CcmF/CycK/Ccl1/NrfE/CcsA family. May interact with Ccs1.

It localises to the plastid. It is found in the chloroplast thylakoid membrane. Its function is as follows. Required during biogenesis of c-type cytochromes (cytochrome c6 and cytochrome f) at the step of heme attachment. This Cucumis sativus (Cucumber) protein is Cytochrome c biogenesis protein CcsA.